We begin with the raw amino-acid sequence, 525 residues long: Light-independent protochlorophyllide reductase subunit B (525 aa).

Asp36 serves as a coordination point for [4Fe-4S] cluster. Catalysis depends on Asp286, which acts as the Proton donor. 421–422 (GL) contacts substrate.

This sequence belongs to the ChlB/BchB/BchZ family. In terms of assembly, protochlorophyllide reductase is composed of three subunits; ChlL, ChlN and ChlB. Forms a heterotetramer of two ChlB and two ChlN subunits. The cofactor is [4Fe-4S] cluster.

The enzyme catalyses chlorophyllide a + oxidized 2[4Fe-4S]-[ferredoxin] + 2 ADP + 2 phosphate = protochlorophyllide a + reduced 2[4Fe-4S]-[ferredoxin] + 2 ATP + 2 H2O. Its pathway is porphyrin-containing compound metabolism; chlorophyll biosynthesis (light-independent). Functionally, component of the dark-operative protochlorophyllide reductase (DPOR) that uses Mg-ATP and reduced ferredoxin to reduce ring D of protochlorophyllide (Pchlide) to form chlorophyllide a (Chlide). This reaction is light-independent. The NB-protein (ChlN-ChlB) is the catalytic component of the complex. This chain is Light-independent protochlorophyllide reductase subunit B, found in Prochlorococcus marinus (strain NATL2A).